Consider the following 293-residue polypeptide: Neugrin (293 aa).

Positions 1 to 18 (MALSLSLFLGGRVRTSLA) are cleaved as a signal peptide. Ser41 is subject to Phosphoserine. 2 disordered regions span residues 177–210 (DEVS…EGRD) and 224–254 (TTAL…TLPS). Asn185 carries N-linked (GlcNAc...) asparagine glycosylation. Residues 198-210 (HSTDAQKKREGRD) show a composition bias toward basic and acidic residues.

This sequence belongs to the neugrin family. As to quaternary structure, forms a regulatory protein-RNA complex, consisting of RCC1L, NGRN, RPUSD3, RPUSD4, TRUB2, FASTKD2 and 16S mt-rRNA. Interacts with 16S mt-rRNA; this interaction is direct. Expressed in heart, brain, liver and kidney. In brain, mainly expressed in neurons rather than glial cells.

It localises to the nucleus. The protein resides in the secreted. Its subcellular location is the mitochondrion membrane. Functionally, plays an essential role in mitochondrial ribosome biogenesis. As a component of a functional protein-RNA module, consisting of RCC1L, NGRN, RPUSD3, RPUSD4, TRUB2, FASTKD2 and 16S mitochondrial ribosomal RNA (16S mt-rRNA), controls 16S mt-rRNA abundance and is required for intra-mitochondrial translation of core subunits of the oxidative phosphorylation system. The sequence is that of Neugrin (Ngrn) from Mus musculus (Mouse).